Reading from the N-terminus, the 870-residue chain is MTGHVDPVHFERLKIQSVTFGSANDNASLQVHNVSKSPEYSKYSYSRKNNEPIEFIQLREEEGPIVKVEEEDGLTLRFQLEFHAQEGKRDVTNLTCVYGTSPQQLDRLITREFSSDANFQNNHQVFLIGNIEFHSNENSKKIEWTWSNQSLHTLYFRNGGSPIYLCFAEYDKRLNCLVPLKTFQFYVTESDQDSTPATPFPMPMHLAEETATSPEISDAPPLSGNVDPLPINSPPLTNPVARDIDQTEPEDGPLFRATILNYERTTHDMRMVLKKLIKRIEHVAHSHGLLYMSYKELMSAFERVATINPPAFKPFLDHYYAAAAQSFDSFNIDRARLLRNFLIEPLRKIYDTDIKNVSTKKKDFEETSRDYYTSLSRYLSKSEKETSSDKTKESKFAAKKRDFELSRFDYYSYMQDINGGRKGQEVLSVLTSFAANDYNLIHSSLTDIDALRPSIIQLQDIVTEANKEFQLLRAEREERRRYIETSSRELEDKDAEIAAQAYKAKVDQDTSAKQGLLLAFSKSTSDLQVVGKSGWHKYWVVLDHGKICEYANWKQSLELHTEPIDLLMATVRPAQSVSRKFCFEVITPQTKRTYQATSKAEMHSWIEAIQYSISESIVQKGKGTSMNSEETSVKHGPTSTIGKALQRVASVTSPSRHNSDSKEKKQTKSPSLVKTLKEMHSSDQSCADCNTTARVEWCAINFPVVLCIDCSGIHRSLGTHITKIRSLTLDKFNPETVDLLYATGNSFVNEIYEGGITDWKIKNFENQERRVQFVKDKYLYKRFIKSSFSHDPNTGLLESIEHSNLKEAVLCLALGADVNYQRAVVKALLKNNYLIAELLTLNGASLNVDEVTMETLSARAQAFVMNRATP.

The disordered stretch occupies residues 212 to 251 (TSPEISDAPPLSGNVDPLPINSPPLTNPVARDIDQTEPED). The 105-residue stretch at 510–614 (TSAKQGLLLA…WIEAIQYSIS (105 aa)) folds into the PH domain. A phosphoserine mark is found at Ser625, Ser653, and Ser655. The interval 647–672 (RVASVTSPSRHNSDSKEKKQTKSPSL) is disordered. The span at 657 to 666 (HNSDSKEKKQ) shows a compositional bias: basic and acidic residues. In terms of domain architecture, Arf-GAP spans 670-791 (PSLVKTLKEM…RFIKSSFSHD (122 aa)). Residues 686 to 710 (CADCNTTARVEWCAINFPVVLCIDC) form a C4-type zinc finger.

This chain is Protein csx2 (csx2), found in Schizosaccharomyces pombe (strain 972 / ATCC 24843) (Fission yeast).